The primary structure comprises 156 residues: Small ribosomal subunit protein uS7c (156 aa).

Belongs to the universal ribosomal protein uS7 family. As to quaternary structure, part of the 30S ribosomal subunit.

The protein localises to the plastid. Its subcellular location is the cyanelle. Its function is as follows. One of the primary rRNA binding proteins, it binds directly to 16S rRNA where it nucleates assembly of the head domain of the 30S subunit. The sequence is that of Small ribosomal subunit protein uS7c (rps7) from Cyanophora paradoxa.